We begin with the raw amino-acid sequence, 352 residues long: Nicotinate-nucleotide--dimethylbenzimidazole phosphoribosyltransferase (352 aa).

Glutamate 318 functions as the Proton acceptor in the catalytic mechanism.

Belongs to the CobT family.

The catalysed reaction is 5,6-dimethylbenzimidazole + nicotinate beta-D-ribonucleotide = alpha-ribazole 5'-phosphate + nicotinate + H(+). It functions in the pathway nucleoside biosynthesis; alpha-ribazole biosynthesis; alpha-ribazole from 5,6-dimethylbenzimidazole: step 1/2. In terms of biological role, catalyzes the synthesis of alpha-ribazole-5'-phosphate from nicotinate mononucleotide (NAMN) and 5,6-dimethylbenzimidazole (DMB). The chain is Nicotinate-nucleotide--dimethylbenzimidazole phosphoribosyltransferase from Geotalea uraniireducens (strain Rf4) (Geobacter uraniireducens).